Here is a 147-residue protein sequence, read N- to C-terminus: UPF0306 protein YE0465 (147 aa).

Belongs to the UPF0306 family.

The sequence is that of UPF0306 protein YE0465 from Yersinia enterocolitica serotype O:8 / biotype 1B (strain NCTC 13174 / 8081).